The primary structure comprises 675 residues: Cysteine-rich receptor-like protein kinase 25 (675 aa).

The first 25 residues, 1–25 (MSSCFKSSVSLFSVFLFMILKTVTS), serve as a signal peptide directing secretion. Topologically, residues 26-281 (DPTYLYHICP…IPSEKGKGKN (256 aa)) are extracellular. Gnk2-homologous domains are found at residues 28 to 134 (TYLY…NQSI) and 140 to 247 (IRPG…LYPF). N-linked (GlcNAc...) asparagine glycans are attached at residues Asn36, Asn43, Asn77, Asn106, Asn131, Asn151, Asn161, Asn188, Asn249, and Asn281. Residues 282-302 (LTVIVTAIAVPVSVCVLLLGA) traverse the membrane as a helical segment. The Cytoplasmic portion of the chain corresponds to 303-675 (MCWLLARRRN…DSSITIVYPR (373 aa)). A Protein kinase domain is found at 347–622 (FSESNKLGHG…DILVMMNSFT (276 aa)). ATP contacts are provided by residues 353–361 (LGHGGFGEV) and Lys375. Tyr420 carries the post-translational modification Phosphotyrosine. The active-site Proton acceptor is the Asp472. Ser476 carries the phosphoserine modification. Thr512 is subject to Phosphothreonine. Phosphotyrosine is present on Tyr520. The disordered stretch occupies residues 638-661 (MKDSRDPRSGGSASDHSATSKSLP). Over residues 648 to 661 (GSASDHSATSKSLP) the composition is skewed to polar residues.

The protein belongs to the protein kinase superfamily. Ser/Thr protein kinase family. CRK subfamily.

The protein localises to the membrane. It catalyses the reaction L-seryl-[protein] + ATP = O-phospho-L-seryl-[protein] + ADP + H(+). It carries out the reaction L-threonyl-[protein] + ATP = O-phospho-L-threonyl-[protein] + ADP + H(+). In Arabidopsis thaliana (Mouse-ear cress), this protein is Cysteine-rich receptor-like protein kinase 25 (CRK25).